The sequence spans 517 residues: Acetylcholine receptor subunit delta (517 aa).

A signal peptide spans 1–21 (MEGPVLTLGLLAALAVCGSWG). Residues 22 to 245 (LNEEERLIRH…ITFYLIIRRK (224 aa)) lie on the Extracellular side of the membrane. 2 N-linked (GlcNAc...) asparagine glycosylation sites follow: Asn97 and Asn164. The cysteines at positions 151 and 165 are disulfide-linked. 3 consecutive transmembrane segments (helical) span residues 246–270 (PLFY…VFYL), 278–299 (TSVA…SKRL), and 312–333 (FLLF…VLNI). The Cytoplasmic portion of the chain corresponds to 334–471 (HFRTPSTHVL…WNRVARTVDR (138 aa)). Position 390 is a phosphotyrosine; by Tyr-kinases (Tyr390). Residues 472 to 490 (LCLFVVTPVMVVGTAWIFL) traverse the membrane as a helical segment.

The protein belongs to the ligand-gated ion channel (TC 1.A.9) family. Acetylcholine receptor (TC 1.A.9.1) subfamily. Delta/CHRND sub-subfamily. Pentamer of two alpha chains, and one each of the beta, delta, and gamma (in immature muscle) or epsilon (in mature muscle) chains. The muscle heteropentamer composed of alpha-1, beta-1, delta, epsilon subunits interacts with the alpha-conotoxin ImII.

It is found in the postsynaptic cell membrane. It localises to the cell membrane. It catalyses the reaction K(+)(in) = K(+)(out). The enzyme catalyses Na(+)(in) = Na(+)(out). After binding acetylcholine, the AChR responds by an extensive change in conformation that affects all subunits and leads to opening of an ion-conducting channel across the plasma membrane. The protein is Acetylcholine receptor subunit delta of Homo sapiens (Human).